A 74-amino-acid polypeptide reads, in one-letter code: Cytochrome c oxidase assembly factor 5 (74 aa).

Residues 27–65 (QSDCVLKEGKSPRQCLKEGNCKALKYSFFECKRSMLDAR) enclose the CHCH domain. Positions 30 to 41 (CVLKEGKSPRQC) match the Cx10C motif motif. 2 cysteine pairs are disulfide-bonded: Cys-30-Cys-57 and Cys-41-Cys-47. The residue at position 37 (Ser-37) is a Phosphoserine. Positions 47–57 (CKALKYSFFEC) match the Cx9C motif motif.

Belongs to the PET191 family.

Involved in an early step of the mitochondrial complex IV assembly process. The polypeptide is Cytochrome c oxidase assembly factor 5 (COA5) (Bos taurus (Bovine)).